The chain runs to 518 residues: Calcium/calmodulin-dependent protein kinase kinase cmkC (518 aa).

Residues 1–72 are disordered; sequence MANEGAGSLQ…SEYTLSQDDG (72 aa). Polar residues-rich tracts occupy residues 8-17 and 60-71; these read SLQQDASPGS and NARSEYTLSQDD. Residues 81 to 376 form the Protein kinase domain; sequence YVIKQEIGRG…MDELREHPWV (296 aa). ATP contacts are provided by residues 87–95 and K109; that span reads IGRGSFGAV. The tract at residues 119-149 is disordered; sequence RAKSQLLRQSRGPKRSSRWPKLPFSSPGTGT. D243 serves as the catalytic Proton acceptor. The interval 404–409 is autoinhibitory domain; it reads FSAITK. Positions 407-431 are calmodulin-binding; it reads ITKNFGHVLAVMKAAKKFKSLQGPT. The segment at 453-472 is disordered; it reads PTQMDPEESVSLPSPLPYKK.

The protein belongs to the protein kinase superfamily. Ser/Thr protein kinase family.

The enzyme catalyses L-seryl-[protein] + ATP = O-phospho-L-seryl-[protein] + ADP + H(+). It carries out the reaction L-threonyl-[protein] + ATP = O-phospho-L-threonyl-[protein] + ADP + H(+). Activated by Ca(2+)/calmodulin. Binding of calmodulin may relieve intrasteric autoinhibition. Calcium/calmodulin-dependent protein kinase that operates in the calcium-triggered CaMKK-CaMK1 signaling cascade. Phosphorylates and activates cmkB in vitro. Required in G1-phase of the cell cycle for proper timing of the initial nuclear division after germination as well as for subsequent nuclear division cycles. Required for the normal temporal regulation of nimX activity. The sequence is that of Calcium/calmodulin-dependent protein kinase kinase cmkC from Emericella nidulans (Aspergillus nidulans).